The chain runs to 142 residues: Hemoglobin subunit alpha-1 (142 aa).

The Globin domain maps to 2–142 (KLTAEDKHNV…VAYVLASKYR (141 aa)). O2 is bound at residue H59. Heme b is bound at residue H88.

It belongs to the globin family. As to quaternary structure, major hemoglobin is a heterotetramer of two alpha-1 chains and two beta-1 chains. Red blood cells.

Involved in oxygen transport from the lung to the various peripheral tissues. The chain is Hemoglobin subunit alpha-1 from Pleurodeles waltl (Iberian ribbed newt).